Reading from the N-terminus, the 552-residue chain is Amino-acid acetyltransferase, mitochondrial (552 aa).

The transit peptide at 1-32 (MIKTWIRCLTTEVRYHQPNAHGRSLVMSVLNS) directs the protein to the mitochondrion. One can recognise an N-acetyltransferase domain in the interval 379–545 (QTGKSDPVSK…LRDYAKYVRD (167 aa)).

This sequence belongs to the acetyltransferase family.

It localises to the mitochondrion. The catalysed reaction is L-glutamate + acetyl-CoA = N-acetyl-L-glutamate + CoA + H(+). It participates in amino-acid biosynthesis; L-arginine biosynthesis; N(2)-acetyl-L-ornithine from L-glutamate: step 1/4. In terms of biological role, N-acetylglutamate synthase involved in arginine biosynthesis. The sequence is that of Amino-acid acetyltransferase, mitochondrial (ARG2) from Kluyveromyces lactis (strain ATCC 8585 / CBS 2359 / DSM 70799 / NBRC 1267 / NRRL Y-1140 / WM37) (Yeast).